The primary structure comprises 362 residues: Caveolae-associated protein 4 (362 aa).

A disordered region spans residues 1–24 (MEHNGSASNAGKIHQNRLSSVTED). Residues 100 to 120 (IKDVKARVEKQQVRVTKVETK) adopt a coiled-coil conformation. S152, S171, and S172 each carry phosphoserine. Positions 227–255 (PERRERLRQSGERLRQSGERLRQSGERFK) are enriched in basic and acidic residues. The interval 227–261 (PERRERLRQSGERLRQSGERLRQSGERFKKSISNA) is disordered. Y324 carries the phosphotyrosine modification. A Phosphothreonine modification is found at T334. S353 is modified (phosphoserine).

This sequence belongs to the CAVIN family. Component of the CAVIN complex composed of CAVIN1, CAVIN2, CAVIN3 and CAVIN4. Interacts with CAVIN1, CAV3, ADRA1A and ADRA1B. Interacts with CAVIN2; this augments the transactivation of NPPA. Interacts with MAPK1 and MAPK3. Expressed at much higher levels in cardiomyocytes than in non-cardiomyocytes.

Its subcellular location is the cytoplasm. The protein resides in the myofibril. The protein localises to the sarcomere. It is found in the cytosol. It localises to the cell membrane. Its subcellular location is the sarcolemma. The protein resides in the membrane. The protein localises to the caveola. Modulates the morphology of formed caveolae in cardiomyocytes, but is not required for caveolar formation. Facilitates the recruitment of MAPK1/3 to caveolae within cardiomyocytes and regulates alpha-1 adrenergic receptor-induced hypertrophic responses in cardiomyocytes through MAPK1/3 activation. Contributes to proper membrane localization and stabilization of caveolin-3 (CAV3) in cardiomyocytes. Induces RHOA activation and activates NPPA transcription and myofibrillar organization through the Rho/ROCK signaling pathway. The protein is Caveolae-associated protein 4 of Rattus norvegicus (Rat).